The sequence spans 72 residues: Bowman-Birk type proteinase inhibitor 2a (72 aa).

Disulfide bonds link Cys-8-Cys-61, Cys-9-Cys-24, Cys-12-Cys-57, Cys-14-Cys-22, Cys-31-Cys-38, Cys-35-Cys-50, and Cys-40-Cys-48.

In terms of assembly, dimer.

Inhibits trypsin (IC(50)=0.9 nM) and alpha-chymotrypsin (IC(50)=1.1 nM). In Lathyrus sativus (White vetchling), this protein is Bowman-Birk type proteinase inhibitor 2a.